A 544-amino-acid polypeptide reads, in one-letter code: Chaperonin GroEL 2 (544 aa).

ATP contacts are provided by residues 29–32 (TLGP), 86–90 (DGTTT), Gly-413, 479–481 (NAA), and Asp-495.

Belongs to the chaperonin (HSP60) family. In terms of assembly, forms a cylinder of 14 subunits composed of two heptameric rings stacked back-to-back. Interacts with the co-chaperonin GroES.

It is found in the cytoplasm. The enzyme catalyses ATP + H2O + a folded polypeptide = ADP + phosphate + an unfolded polypeptide.. Together with its co-chaperonin GroES, plays an essential role in assisting protein folding. The GroEL-GroES system forms a nano-cage that allows encapsulation of the non-native substrate proteins and provides a physical environment optimized to promote and accelerate protein folding. This Prochlorococcus marinus subsp. pastoris (strain CCMP1986 / NIES-2087 / MED4) protein is Chaperonin GroEL 2.